The primary structure comprises 455 residues: Serine--tRNA ligase (455 aa).

Position 252 to 254 (252 to 254 (TAE)) interacts with L-serine. Residues 283–285 (RKE) and valine 299 each bind ATP. Glutamate 306 provides a ligand contact to L-serine. 370 to 373 (EVVS) contacts ATP. Threonine 406 provides a ligand contact to L-serine.

The protein belongs to the class-II aminoacyl-tRNA synthetase family. Type-1 seryl-tRNA synthetase subfamily. In terms of assembly, homodimer. The tRNA molecule binds across the dimer.

It localises to the cytoplasm. It catalyses the reaction tRNA(Ser) + L-serine + ATP = L-seryl-tRNA(Ser) + AMP + diphosphate + H(+). It carries out the reaction tRNA(Sec) + L-serine + ATP = L-seryl-tRNA(Sec) + AMP + diphosphate + H(+). The protein operates within aminoacyl-tRNA biosynthesis; selenocysteinyl-tRNA(Sec) biosynthesis; L-seryl-tRNA(Sec) from L-serine and tRNA(Sec): step 1/1. Catalyzes the attachment of serine to tRNA(Ser). Is also able to aminoacylate tRNA(Sec) with serine, to form the misacylated tRNA L-seryl-tRNA(Sec), which will be further converted into selenocysteinyl-tRNA(Sec). The polypeptide is Serine--tRNA ligase (Pyrococcus horikoshii (strain ATCC 700860 / DSM 12428 / JCM 9974 / NBRC 100139 / OT-3)).